Consider the following 630-residue polypeptide: Cytochrome B pre-mRNA-processing protein 2 (630 aa).

Its subcellular location is the mitochondrion. Appears to be specifically required for the splicing of the terminal intron (bI5) of the cytochrome b pre-mRNA. Can also stimulates the splicing of the omega intron of the precursor of large ribosomal RNA. This Saccharomyces cerevisiae (strain ATCC 204508 / S288c) (Baker's yeast) protein is Cytochrome B pre-mRNA-processing protein 2 (CBP2).